A 429-amino-acid chain; its full sequence is Adenylosuccinate synthetase (429 aa).

Residues 12–18 and 40–42 contribute to the GTP site; these read GDEGKGK and GHT. Asp13 functions as the Proton acceptor in the catalytic mechanism. 2 residues coordinate Mg(2+): Asp13 and Gly40. IMP-binding positions include 13 to 16, 38 to 41, Thr128, Arg142, Gln223, Thr238, and Arg302; these read DEGK and NAGH. Catalysis depends on His41, which acts as the Proton donor. 298–304 lines the substrate pocket; that stretch reads VNTGRKR. GTP is bound by residues Arg304, 330–332, and 412–414; these read KLD and GVG.

The protein belongs to the adenylosuccinate synthetase family. As to quaternary structure, homodimer. The cofactor is Mg(2+).

Its subcellular location is the cytoplasm. It carries out the reaction IMP + L-aspartate + GTP = N(6)-(1,2-dicarboxyethyl)-AMP + GDP + phosphate + 2 H(+). The protein operates within purine metabolism; AMP biosynthesis via de novo pathway; AMP from IMP: step 1/2. Functionally, plays an important role in the de novo pathway of purine nucleotide biosynthesis. Catalyzes the first committed step in the biosynthesis of AMP from IMP. This Corynebacterium jeikeium (strain K411) protein is Adenylosuccinate synthetase.